Consider the following 135-residue polypeptide: uncharacterized protein (135 aa).

Helical transmembrane passes span 11-31 (ILFFGLAFILVGFGLILGYLI) and 57-77 (LGTAAAVAGGVIAGELITDAI).

Its subcellular location is the cell membrane. This is an uncharacterized protein from Methanocaldococcus jannaschii (strain ATCC 43067 / DSM 2661 / JAL-1 / JCM 10045 / NBRC 100440) (Methanococcus jannaschii).